A 472-amino-acid chain; its full sequence is uncharacterized protein (472 aa).

Its subcellular location is the mitochondrion. This is an uncharacterized protein from Saccharomyces cerevisiae (strain ATCC 204508 / S288c) (Baker's yeast).